The chain runs to 278 residues: MRDRLFSIIYKYNLRPNRTLGQNFLIVPDIIERNVKRAELSEKDTVLEIGPGLGVLTDELSKKAGKVYAIEADSRMIEILQREYSWPNVELIKGDAVKVEWPEFNKMVSNLPYQISSPVTFKLLKHEFERAVLIYQLEFAERMIAKPGDRNYSRLSLMVQAKANVELVERIGRGAFWPRPKVDSAVVVLEPKPEKERIELNENLVKALFQHRRSTVASALKKSAHMLGTDKKSIKDYLSSLPHAEKRVFQLSPEEVLDIEVYLRDNGLLSQKPEKGLN.

S-adenosyl-L-methionine is bound by residues Asn-23, Leu-25, Gly-50, Glu-71, Asp-95, and Asn-110.

Belongs to the class I-like SAM-binding methyltransferase superfamily. rRNA adenine N(6)-methyltransferase family. RsmA subfamily.

Its subcellular location is the cytoplasm. In terms of biological role, specifically dimethylates two adjacent adenosines in the loop of a conserved hairpin near the 3'-end of 16S rRNA in the 30S particle. May play a critical role in biogenesis of 30S subunits. The protein is Probable ribosomal RNA small subunit methyltransferase A of Thermococcus gammatolerans (strain DSM 15229 / JCM 11827 / EJ3).